Consider the following 216-residue polypeptide: NADH-quinone oxidoreductase subunit C (216 aa).

Belongs to the complex I 30 kDa subunit family. NDH-1 is composed of 14 different subunits. Subunits NuoB, C, D, E, F, and G constitute the peripheral sector of the complex.

Its subcellular location is the cell inner membrane. The enzyme catalyses a quinone + NADH + 5 H(+)(in) = a quinol + NAD(+) + 4 H(+)(out). NDH-1 shuttles electrons from NADH, via FMN and iron-sulfur (Fe-S) centers, to quinones in the respiratory chain. The immediate electron acceptor for the enzyme in this species is believed to be ubiquinone. Couples the redox reaction to proton translocation (for every two electrons transferred, four hydrogen ions are translocated across the cytoplasmic membrane), and thus conserves the redox energy in a proton gradient. In Francisella tularensis subsp. holarctica (strain OSU18), this protein is NADH-quinone oxidoreductase subunit C.